A 450-amino-acid polypeptide reads, in one-letter code: Glucose-6-phosphate isomerase (450 aa).

Phosphothreonine is present on Thr-39. Glu-291 functions as the Proton donor in the catalytic mechanism. Active-site residues include His-312 and Lys-426.

Belongs to the GPI family.

The protein resides in the cytoplasm. The enzyme catalyses alpha-D-glucose 6-phosphate = beta-D-fructose 6-phosphate. The protein operates within carbohydrate biosynthesis; gluconeogenesis. It participates in carbohydrate degradation; glycolysis; D-glyceraldehyde 3-phosphate and glycerone phosphate from D-glucose: step 2/4. Catalyzes the reversible isomerization of glucose-6-phosphate to fructose-6-phosphate. The sequence is that of Glucose-6-phosphate isomerase from Bacillus mycoides (strain KBAB4) (Bacillus weihenstephanensis).